Reading from the N-terminus, the 518-residue chain is Glutamate--cysteine ligase (518 aa).

The protein belongs to the glutamate--cysteine ligase type 1 family. Type 1 subfamily.

It catalyses the reaction L-cysteine + L-glutamate + ATP = gamma-L-glutamyl-L-cysteine + ADP + phosphate + H(+). Its pathway is sulfur metabolism; glutathione biosynthesis; glutathione from L-cysteine and L-glutamate: step 1/2. This is Glutamate--cysteine ligase from Citrobacter koseri (strain ATCC BAA-895 / CDC 4225-83 / SGSC4696).